A 234-amino-acid chain; its full sequence is Endonuclease V (234 aa).

Mg(2+) is bound by residues Asp36 and Asp104.

It belongs to the endonuclease V family. Mg(2+) is required as a cofactor.

It localises to the cytoplasm. The catalysed reaction is Endonucleolytic cleavage at apurinic or apyrimidinic sites to products with a 5'-phosphate.. DNA repair enzyme involved in the repair of deaminated bases. Selectively cleaves double-stranded DNA at the second phosphodiester bond 3' to a deoxyinosine leaving behind the intact lesion on the nicked DNA. This chain is Endonuclease V, found in Yersinia pseudotuberculosis serotype O:1b (strain IP 31758).